A 120-amino-acid chain; its full sequence is Large ribosomal subunit protein bL12 (120 aa).

Belongs to the bacterial ribosomal protein bL12 family. In terms of assembly, homodimer. Part of the ribosomal stalk of the 50S ribosomal subunit. Forms a multimeric L10(L12)X complex, where L10 forms an elongated spine to which 2 to 4 L12 dimers bind in a sequential fashion. Binds GTP-bound translation factors.

In terms of biological role, forms part of the ribosomal stalk which helps the ribosome interact with GTP-bound translation factors. Is thus essential for accurate translation. This chain is Large ribosomal subunit protein bL12, found in Lactobacillus acidophilus (strain ATCC 700396 / NCK56 / N2 / NCFM).